The following is a 638-amino-acid chain: Factor of DNA methylation 3 (638 aa).

Residues 318-497 adopt a coiled-coil conformation; sequence FNRIFADHEK…RALISNLRDM (180 aa).

In terms of biological role, acts in association with FDM4 and FDM5 for RNA-directed DNA methylation (RdDM). This chain is Factor of DNA methylation 3, found in Arabidopsis thaliana (Mouse-ear cress).